Reading from the N-terminus, the 185-residue chain is MQRILMAPGQSCCALAILLAIVNFQHGGCIHVTSSASQKGGRLDLTCTLWHKKDEAEGLILFWCKDNPWNCSPETNLEQLRVKRDPETDGITEKSSQLVFTIEQATPSDSGTYQCCARSQKPEIYIHGHFLSVLVTGNHTEIRQRQRSHPDFSHINGTLSSGFLQVKAWGMLVTSLVALQALYTL.

The signal sequence occupies residues 1–27 (MQRILMAPGQSCCALAILLAIVNFQHG). The Ig-like V-type domain occupies 28–136 (GCIHVTSSAS…HGHFLSVLVT (109 aa)). 2 cysteine pairs are disulfide-bonded: Cys-47/Cys-115 and Cys-64/Cys-71. 2 N-linked (GlcNAc...) asparagine glycosylation sites follow: Asn-138 and Asn-156. Residue Ser-160 is the site of GPI-anchor amidated serine attachment. The propeptide at 161–185 (SGFLQVKAWGMLVTSLVALQALYTL) is removed in mature form.

In terms of assembly, homomultimer; disulfide-linked. Interacts with classical and non-classical MHC class I molecules. Interacts with TNFRSF14 (via cysteine-rich domain 1); this interaction is direct. Interacts with LCK and CD247/CD3 zeta chain. In terms of tissue distribution, expressed in resting and activated NK cell subsets (at protein level). Expressed in resting NKT cells (at protein level). Expressed in activated CD8+ T cells (at protein level). Highly expressed in intraepithelial lymphocyte (IEL) subsets, particularly in innate-like CD8A-positive IELs (at protein level).

Its subcellular location is the cell membrane. It localises to the secreted. Functionally, receptor on immune cells capable to deliver stimulatory or inhibitory signals that regulate cell activation and differentiation. Exists as a GPI-anchored and as a transmembrane form, each likely initiating distinct signaling pathways via phosphoinositol 3-kinase in activated NK cells and via LCK and CD247/CD3 zeta chain in activated T cells. Receptor for both classical and non-classical MHC class I molecules. Receptor or ligand for TNF superfamily member TNFRSF14, participating in bidirectional cell-cell contact signaling between antigen presenting cells and lymphocytes. Upon ligation of TNFRSF14, provides stimulatory signal to NK cells enhancing IFNG production and anti-tumor immune response. On activated CD4+ T cells, interacts with TNFRSF14 and down-regulates CD28 costimulatory signaling, restricting memory and alloantigen-specific immune response. In the context of bacterial infection, acts as a ligand for TNFRSF14 on epithelial cells, triggering the production of antimicrobial proteins and pro-inflammatory cytokines. In terms of biological role, the soluble GPI-cleaved form, usually released by activated lymphocytes, might play an immune regulatory role by limiting lymphocyte effector functions. The protein is CD160 antigen of Mus musculus (Mouse).